The following is a 591-amino-acid chain: Aspartate--tRNA ligase (591 aa).

Glutamate 173 is an L-aspartate binding site. The aspartate stretch occupies residues 197–200; that stretch reads QLFK. Arginine 219 contributes to the L-aspartate binding site. ATP contacts are provided by residues 219 to 221 and glutamine 228; that span reads RDE. Position 448 (histidine 448) interacts with L-aspartate. Glutamate 482 provides a ligand contact to ATP. L-aspartate is bound at residue arginine 489. 534 to 537 lines the ATP pocket; sequence GLDR.

It belongs to the class-II aminoacyl-tRNA synthetase family. Type 1 subfamily. Homodimer.

It localises to the cytoplasm. The catalysed reaction is tRNA(Asp) + L-aspartate + ATP = L-aspartyl-tRNA(Asp) + AMP + diphosphate. In terms of biological role, catalyzes the attachment of L-aspartate to tRNA(Asp) in a two-step reaction: L-aspartate is first activated by ATP to form Asp-AMP and then transferred to the acceptor end of tRNA(Asp). In Shewanella sp. (strain MR-4), this protein is Aspartate--tRNA ligase.